A 209-amino-acid chain; its full sequence is Probable GTP-binding protein EngB (209 aa).

The EngB-type G domain maps to 22 to 198 (TPLEIAFVGR…NRTVGSWFDA (177 aa)). The Mg(2+) site is built by serine 37 and threonine 59.

It belongs to the TRAFAC class TrmE-Era-EngA-EngB-Septin-like GTPase superfamily. EngB GTPase family. Mg(2+) is required as a cofactor.

Its function is as follows. Necessary for normal cell division and for the maintenance of normal septation. This is Probable GTP-binding protein EngB from Neisseria gonorrhoeae.